Reading from the N-terminus, the 103-residue chain is Histone H4.1 (103 aa).

Positions 1 to 14 are enriched in gly residues; that stretch reads MSGRGKGGKGLGKG. A disordered region spans residues 1-20; that stretch reads MSGRGKGGKGLGKGGAKRHR. Position 6 is an N6-acetyl-N6-methyllysine; alternate (lysine 6). Residues lysine 6, lysine 9, and lysine 13 each carry the N6-methyllysine; alternate modification. Lysine 13 bears the N6-acetyl-N6-methyllysine; alternate mark. The DNA-binding element occupies 17–21; the sequence is KRHRK. Lysine 92 bears the N6-glutaryllysine mark.

It belongs to the histone H4 family. The nucleosome is a histone octamer containing two molecules each of H2A, H2B, H3 and H4 assembled in one H3-H4 heterotetramer and two H2A-H2B heterodimers. The octamer wraps approximately 147 bp of DNA. Post-translationally, glutarylation at Lys-92 (H4K91glu) destabilizes nucleosomes by promoting dissociation of the H2A-H2B dimers from nucleosomes.

It is found in the nucleus. The protein resides in the chromosome. Functionally, core component of nucleosome. Nucleosomes wrap and compact DNA into chromatin, limiting DNA accessibility to the cellular machineries which require DNA as a template. Histones thereby play a central role in transcription regulation, DNA repair, DNA replication and chromosomal stability. DNA accessibility is regulated via a complex set of post-translational modifications of histones, also called histone code, and nucleosome remodeling. This is Histone H4.1 (HHF1) from Eremothecium gossypii (strain ATCC 10895 / CBS 109.51 / FGSC 9923 / NRRL Y-1056) (Yeast).